We begin with the raw amino-acid sequence, 447 residues long: Probable protein phosphatase 2C 71 (447 aa).

The 247-residue stretch at 33-279 (SYGYASSAGK…DNITCVVVRF (247 aa)) folds into the PPM-type phosphatase domain. 4 residues coordinate Mn(2+): D69, G70, D231, and D270. A compositionally biased stretch (low complexity) spans 284–297 (SANNNGSSSSEEAN). The segment at 284–447 (SANNNGSSSS…ARKTTPSIFN (164 aa)) is disordered. The span at 305–331 (NDSDHKISAKETNQDHTTVNKDLDRNT) shows a compositional bias: basic and acidic residues. Composition is skewed to polar residues over residues 346–374 (ADNS…TGEK) and 392–423 (KVPN…GSTG). Positions 424-438 (ERNRKPIKVHSDSAA) are enriched in basic and acidic residues.

This sequence belongs to the PP2C family. Mg(2+) serves as cofactor. Requires Mn(2+) as cofactor.

The catalysed reaction is O-phospho-L-seryl-[protein] + H2O = L-seryl-[protein] + phosphate. The enzyme catalyses O-phospho-L-threonyl-[protein] + H2O = L-threonyl-[protein] + phosphate. The chain is Probable protein phosphatase 2C 71 from Arabidopsis thaliana (Mouse-ear cress).